The chain runs to 160 residues: Putative flagellin YvzB (160 aa).

This sequence belongs to the bacterial flagellin family. Interacts with FliW.

The protein localises to the bacterial flagellum. This is Putative flagellin YvzB (yvzB) from Bacillus subtilis (strain 168).